Here is a 435-residue protein sequence, read N- to C-terminus: Adenylosuccinate synthetase (435 aa).

GTP is bound by residues 11–17 (GDEGKGK) and 39–41 (GHT). Catalysis depends on Asp-12, which acts as the Proton acceptor. Residues Asp-12 and Gly-39 each coordinate Mg(2+). Residues 12 to 15 (DEGK), 37 to 40 (NAGH), Thr-128, Arg-142, Gln-223, Thr-238, and Arg-302 contribute to the IMP site. His-40 functions as the Proton donor in the catalytic mechanism. Residue 298-304 (SVTGRPR) coordinates substrate. GTP is bound by residues Arg-304, 330–332 (KLD), and 412–414 (STG).

This sequence belongs to the adenylosuccinate synthetase family. Homodimer. Requires Mg(2+) as cofactor.

The protein resides in the cytoplasm. It carries out the reaction IMP + L-aspartate + GTP = N(6)-(1,2-dicarboxyethyl)-AMP + GDP + phosphate + 2 H(+). The protein operates within purine metabolism; AMP biosynthesis via de novo pathway; AMP from IMP: step 1/2. Plays an important role in the de novo pathway of purine nucleotide biosynthesis. Catalyzes the first committed step in the biosynthesis of AMP from IMP. The chain is Adenylosuccinate synthetase from Coxiella burnetii (strain CbuK_Q154) (Coxiella burnetii (strain Q154)).